A 164-amino-acid chain; its full sequence is Phosphopantetheine adenylyltransferase (164 aa).

Threonine 10 is a binding site for substrate. ATP-binding positions include 10 to 11 (TF) and histidine 18. Substrate is bound by residues lysine 42, leucine 74, and arginine 88. ATP-binding positions include 89–91 (GIR), glutamate 99, and 124–130 (YAFVSST).

Belongs to the bacterial CoaD family. In terms of assembly, homohexamer. The cofactor is Mg(2+).

The protein localises to the cytoplasm. The enzyme catalyses (R)-4'-phosphopantetheine + ATP + H(+) = 3'-dephospho-CoA + diphosphate. Its pathway is cofactor biosynthesis; coenzyme A biosynthesis; CoA from (R)-pantothenate: step 4/5. Functionally, reversibly transfers an adenylyl group from ATP to 4'-phosphopantetheine, yielding dephospho-CoA (dPCoA) and pyrophosphate. This is Phosphopantetheine adenylyltransferase from Tolumonas auensis (strain DSM 9187 / NBRC 110442 / TA 4).